The following is a 404-amino-acid chain: Formate-dependent phosphoribosylglycinamide formyltransferase (404 aa).

N(1)-(5-phospho-beta-D-ribosyl)glycinamide contacts are provided by residues 25 to 26 and E85; that span reads EL. ATP is bound by residues R118, K159, 164–169, 199–202, and E207; these read SSGKGQ and EGFI. In terms of domain architecture, ATP-grasp spans 123–318; that stretch reads RLAAEELGLP…EFELHARAIL (196 aa). Residues E277 and E289 each coordinate Mg(2+). Residues D296, K365, and 372-373 contribute to the N(1)-(5-phospho-beta-D-ribosyl)glycinamide site; that span reads RR.

The protein belongs to the PurK/PurT family. As to quaternary structure, homodimer.

It catalyses the reaction N(1)-(5-phospho-beta-D-ribosyl)glycinamide + formate + ATP = N(2)-formyl-N(1)-(5-phospho-beta-D-ribosyl)glycinamide + ADP + phosphate + H(+). It participates in purine metabolism; IMP biosynthesis via de novo pathway; N(2)-formyl-N(1)-(5-phospho-D-ribosyl)glycinamide from N(1)-(5-phospho-D-ribosyl)glycinamide (formate route): step 1/1. In terms of biological role, involved in the de novo purine biosynthesis. Catalyzes the transfer of formate to 5-phospho-ribosyl-glycinamide (GAR), producing 5-phospho-ribosyl-N-formylglycinamide (FGAR). Formate is provided by PurU via hydrolysis of 10-formyl-tetrahydrofolate. The sequence is that of Formate-dependent phosphoribosylglycinamide formyltransferase from Burkholderia mallei (strain NCTC 10247).